Consider the following 130-residue polypeptide: Protein ApaG (130 aa).

Residues 3–127 (RAITRNIQVT…FSLDVPDVRR (125 aa)) form the ApaG domain.

This chain is Protein ApaG, found in Xanthobacter autotrophicus (strain ATCC BAA-1158 / Py2).